The following is a 195-amino-acid chain: Adenylate kinase (195 aa).

10 to 15 serves as a coordination point for ATP; that stretch reads GSGKGT. An NMP region spans residues 30 to 59; it reads STGDILRAERAAGTLLGQQAQSYMDRGELV. AMP-binding positions include Thr-31, Arg-36, 57–59, 85–88, and Gln-92; these read ELV and GFPR. Positions 126 to 140 are LID; that stretch reads NRAKQAVNGQQRSDD. Position 127 (Arg-127) interacts with ATP. Residues Arg-137 and Arg-148 each coordinate AMP. Position 176 (Arg-176) interacts with ATP.

This sequence belongs to the adenylate kinase family. Monomer.

It is found in the cytoplasm. It catalyses the reaction AMP + ATP = 2 ADP. The protein operates within purine metabolism; AMP biosynthesis via salvage pathway; AMP from ADP: step 1/1. In terms of biological role, catalyzes the reversible transfer of the terminal phosphate group between ATP and AMP. Plays an important role in cellular energy homeostasis and in adenine nucleotide metabolism. In Thermosynechococcus vestitus (strain NIES-2133 / IAM M-273 / BP-1), this protein is Adenylate kinase.